The chain runs to 50 residues: Small ribosomal subunit protein uS14 (50 aa).

Zn(2+) is bound by residues Cys15, Cys18, Cys33, and Cys36.

This sequence belongs to the universal ribosomal protein uS14 family. Zinc-binding uS14 subfamily. Part of the 30S ribosomal subunit. The cofactor is Zn(2+).

Its function is as follows. Binds 16S rRNA, required for the assembly of 30S particles. The chain is Small ribosomal subunit protein uS14 from Methanosarcina acetivorans (strain ATCC 35395 / DSM 2834 / JCM 12185 / C2A).